The following is a 538-amino-acid chain: Sterol esterase 2 (538 aa).

Residues 1-11 (MVNKVVDEVQR) lie on the Cytoplasmic side of the membrane. A helical; Signal-anchor for type II membrane protein membrane pass occupies residues 12–32 (LVSAIILTSFMTGLFILSLWK). Residues 33 to 538 (NYVTVHFQHK…IENLRFPNAR (506 aa)) are Lumenal-facing. The segment at 42 to 87 (KNDPRDTRSSRTKIQPNDKKKKRPARHSRPLSISSTTPLDLQRDQE) is disordered. The span at 60-70 (KKKKRPARHSR) shows a compositional bias: basic residues. Phosphoserine is present on residues Ser73 and Ser107. The Nucleophile role is filled by Ser287. Catalysis depends on charge relay system residues Asp480 and His511.

Belongs to the AB hydrolase superfamily. Post-translationally, not glycosylated.

Its subcellular location is the cell membrane. It carries out the reaction a sterol ester + H2O = a sterol + a fatty acid + H(+). Functionally, mediates the hydrolysis of steryl esters. Required for mobilization of steryl ester, thereby playing a central role in lipid metabolism. The polypeptide is Sterol esterase 2 (YEH2) (Saccharomyces cerevisiae (strain ATCC 204508 / S288c) (Baker's yeast)).